The primary structure comprises 1004 residues: Sal-like protein 2 (1004 aa).

Disordered stretches follow at residues 1 to 33, 51 to 122, 137 to 177, 220 to 270, and 285 to 307; these read MSRRKQRRPQQLISDCEGPSASENGDASEEDHP, AHQN…EESS, GGGL…SGHL, PASP…EPPK, and PFSVGGVGRSHKPTPAPSPALPG. The C2H2-type 1; atypical zinc finger occupies 34–56; it reads QVCAKCCAQFSDPTEFLAHQNSC. Positions 71–81 are enriched in low complexity; sequence NPSNSSASSAP. Residues 83–98 show a composition bias toward basic and acidic residues; the sequence is PEGHSRSQVMDTEHSN. Over residues 99–110 the composition is skewed to low complexity; that stretch reads PPDSGSSGAPDP. Over residues 151–171 the composition is skewed to pro residues; the sequence is PLPPESTPAPPPPPPPPPPPG. At Ser-243 the chain carries Phosphoserine. 5 consecutive C2H2-type zinc fingers follow at residues 372–394, 400–422, 629–651, 657–679, and 689–711; these read HKCRFCAKVFGSDSALQIHLRSH, YKCNVCGNRFTTRGNLKVHFHRH, NQCVICLRVLSCPRALRLHYGQH, FKCKVCGRAFSTRGNLRAHFVGH, and NSCPICQKKFTNAVTLQQHVRMH. The segment at 712–910 is disordered; sequence LGGQIPNGGS…PGESSGRKAC (199 aa). The segment covering 731–742 has biased composition (polar residues); it reads QENSSEQSTASG. Residues 756–779 show a composition bias toward acidic residues; that stretch reads PEEEMSEEEEEDEEEEEDVTDEDS. Phosphoserine occurs at positions 794, 799, and 803. Acidic residues predominate over residues 800-809; sequence EEVSGAEEEV. The segment covering 810-819 has biased composition (low complexity); it reads ATSVAAPTTV. Basic and acidic residues predominate over residues 820–829; that stretch reads KEMDSNEKAP. The segment covering 832-841 has biased composition (pro residues); sequence TLPPPPPPPD. The span at 896–910 shows a compositional bias: basic and acidic residues; sequence AMKKDPGESSGRKAC. Lys-908 participates in a covalent cross-link: Glycyl lysine isopeptide (Lys-Gly) (interchain with G-Cter in ubiquitin). 2 consecutive C2H2-type zinc fingers follow at residues 908 to 930 and 937 to 961; these read KACEVCGQSFPTQTALEEHQKTH and FTCVFCRQGFLDRATLKKHMLLAHH.

It belongs to the sal C2H2-type zinc-finger protein family. As to expression, expressed throughout embryonic development. In adult predominantly in brain.

It localises to the nucleus. Its function is as follows. Probable transcription factor that plays a role in eye development before, during, and after optic fissure closure. In Mus musculus (Mouse), this protein is Sal-like protein 2 (Sall2).